Consider the following 294-residue polypeptide: MYB-like transcription factor ODO1 (294 aa).

HTH myb-type domains are found at residues 9 to 61 (KLGV…TNYL) and 62 to 116 (RPDL…KKKL). 2 DNA-binding regions (H-T-H motif) span residues 37-61 (WRAV…TNYL) and 89-112 (WSKI…NTHI). Disordered regions lie at residues 128 to 152 (PLKK…NGHQ) and 171 to 191 (TEFD…NSSC).

In terms of tissue distribution, restricted to the petals, with the highest expression in the limb, probably in both epidermal and mesophyll cell layers.

The protein resides in the nucleus. Functionally, R2R3 MYB-type transcription factor controlling the production of volatile organic compounds (VOCs), including floral volatile benzenoids and phenylpropanoids (FVBP), in flowers of fragrant cultivars (e.g. cv. Mitchell and cv. V26) by regulating the shikimate pathway, via the activation of several genes (e.g. EPSPS, ADT1, PAL1, CFAT and CCoAOMT1). This scent, mostly produced in the evening and night by the petals, attracts the pollinators (e.g. the night-active hawkmoth pollinator Manduca sexta). Promotes the expression of ABCG1 in petals three hours before the onset of volatile scent emission. Anthocyanins production is not controlled by ODO1 as color and scent are produced at different stages of development. Seems to trigger a negative feed-back loop that represses the expression of EOBI. This chain is MYB-like transcription factor ODO1, found in Petunia hybrida (Petunia).